We begin with the raw amino-acid sequence, 396 residues long: Acyl-[acyl-carrier-protein] desaturase, chloroplastic (396 aa).

A chloroplast-targeting transit peptide spans 1–33; it reads MALKFHPLTSQSPKLPSFRMPQLASLRSPKFVM. Residues E138, E176, H179, E229, E262, and H265 each contribute to the Fe cation site.

Belongs to the fatty acid desaturase type 2 family. In terms of assembly, homodimer. Fe(2+) serves as cofactor.

Its subcellular location is the plastid. It is found in the chloroplast. The protein operates within lipid metabolism; fatty acid metabolism. In terms of biological role, introduces a cis double bond in the acyl chain of an acyl-[acyl-carrier protein]. The protein is Acyl-[acyl-carrier-protein] desaturase, chloroplastic of Cucumis sativus (Cucumber).